Reading from the N-terminus, the 455-residue chain is Major facilitator superfamily domain-containing protein 10 (455 aa).

The next 11 helical transmembrane spans lie at 27 to 47 (VVFL…PLLP), 86 to 106 (VLFG…CAPL), 113 to 135 (CLGR…AVWA), 148 to 168 (LIGG…ADLG), 176 to 196 (GMAV…MLGA), 202 to 222 (MAPW…FCFL), 275 to 295 (LGLV…TLSF), 310 to 327 (KMFF…GAYA), 336 to 356 (VAAV…IGWG), 359 to 379 (LPVL…VVPC), and 421 to 441 (LAGA…PFFL).

Belongs to the major facilitator superfamily. In terms of tissue distribution, expressed in luminal membrane of renal tubules (at protein level). Detected in all tissues tested with higher expression in heart, splee, kidney, leukocytes and prostate.

It localises to the nucleus inner membrane. Its subcellular location is the cell membrane. Probable organic anion transporter which may serve as a transporter for some non-steroidal anti-inflammatory drugs (NSAIDs) as well as other organic anions across the luminal membranes of renal proximal tubules at the final excretion step into the urine. This chain is Major facilitator superfamily domain-containing protein 10 (MFSD10), found in Homo sapiens (Human).